We begin with the raw amino-acid sequence, 236 residues long: Small ribosomal subunit protein uS3 (236 aa).

One can recognise a KH type-2 domain in the interval 39–107 (IRLYVLEELK…ETSLNIVEIH (69 aa)).

It belongs to the universal ribosomal protein uS3 family. Part of the 30S ribosomal subunit. Forms a tight complex with proteins S10 and S14.

Its function is as follows. Binds the lower part of the 30S subunit head. Binds mRNA in the 70S ribosome, positioning it for translation. The protein is Small ribosomal subunit protein uS3 of Bartonella quintana (strain Toulouse) (Rochalimaea quintana).